The primary structure comprises 89 residues: Large ribosomal subunit protein bL28 (89 aa).

The protein belongs to the bacterial ribosomal protein bL28 family.

The sequence is that of Large ribosomal subunit protein bL28 from Chlamydia trachomatis serovar L2 (strain ATCC VR-902B / DSM 19102 / 434/Bu).